Here is a 542-residue protein sequence, read N- to C-terminus: Organic anion transporter 3 (542 aa).

The Cytoplasmic segment spans residues 1 to 20 (MTFSEILDRVGSMGRFQFLH). The residue at position 4 (Ser-4) is a Phosphoserine. Residues 21–41 (VAILGLPILNMANHNLLQIFT) form a helical membrane-spanning segment. The Extracellular portion of the chain corresponds to 42 to 123 (AATPVHHCRP…LVCNSNKLKE (82 aa)). Residue Asn-86 is glycosylated (N-linked (GlcNAc...) asparagine). Residues 124 to 144 (MAQSIFMAGILIGGLVLGDLS) traverse the membrane as a helical segment. Residues 145 to 154 (DRFGRRPILT) lie on the Cytoplasmic side of the membrane. The chain crosses the membrane as a helical span at residues 155–175 (CSYLLLAASGSGAAFSPTFPI). A topological domain (extracellular) is located at residue Tyr-176. The helical transmembrane segment at 177–197 (MVFRFLCGFGISGITLSTVIL) threads the bilayer. Over 198–212 (NVEWVPTRMRAIMST) the chain is Cytoplasmic. Residues 213 to 233 (ALGYCYTFGQFILPGLAYAIP) traverse the membrane as a helical segment. Over 234-236 (QWR) the chain is Extracellular. The helical transmembrane segment at 237–257 (WLQLTVSIPFFIFFLSSWWTP) threads the bilayer. Residues 258 to 327 (ESIRWLVLSG…FRIPMLRRMT (70 aa)) are Cytoplasmic-facing. A helical membrane pass occupies residues 328–348 (FCLSLAWFATGFAYYSLAMGV). Over 349 to 354 (EEFGVN) the chain is Extracellular. The chain crosses the membrane as a helical span at residues 355–375 (LYILQIIFGGVDVPAKFITIL). Over 376 to 386 (SLSYLGRHTTQ) the chain is Cytoplasmic. Residues 387 to 407 (AAALLLAGGAILALTFVPLDL) form a helical membrane-spanning segment. Over 408 to 471 (QTVRTVLAVF…LVKITGEVQP (64 aa)) the chain is Extracellular. The chain crosses the membrane as a helical span at residues 472 to 492 (FIPNIIYGITALLGGSAAFFL). The Cytoplasmic segment spans residues 493–542 (PETLNQPLPETIEDLENWSLRAKKPKQEPEVEKASQRIPLQPHGPGLGSS). The interval 515–542 (KKPKQEPEVEKASQRIPLQPHGPGLGSS) is disordered. Over residues 517–527 (PKQEPEVEKAS) the composition is skewed to basic and acidic residues.

The protein belongs to the major facilitator (TC 2.A.1) superfamily. Organic cation transporter (TC 2.A.1.19) family.

The protein localises to the basolateral cell membrane. It catalyses the reaction estrone 3-sulfate(out) + glutarate(in) = estrone 3-sulfate(in) + glutarate(out). The enzyme catalyses estrone 3-sulfate(in) + 2-oxoglutarate(out) = estrone 3-sulfate(out) + 2-oxoglutarate(in). It carries out the reaction glutarate(in) + 2-oxoglutarate(out) = glutarate(out) + 2-oxoglutarate(in). The catalysed reaction is urate(in) + 2-oxoglutarate(out) = urate(out) + 2-oxoglutarate(in). It catalyses the reaction taurocholate(out) + glutarate(in) = taurocholate(in) + glutarate(out). The enzyme catalyses dehydroepiandrosterone 3-sulfate(out) + glutarate(in) = dehydroepiandrosterone 3-sulfate(in) + glutarate(out). It carries out the reaction prostaglandin F2alpha(out) + glutarate(in) = prostaglandin F2alpha(in) + glutarate(out). The catalysed reaction is prostaglandin F2alpha(out) + 2-oxoglutarate(in) = prostaglandin F2alpha(in) + 2-oxoglutarate(out). It catalyses the reaction (R)-carnitine(out) + 2-oxoglutarate(in) = (R)-carnitine(in) + 2-oxoglutarate(out). The enzyme catalyses glutarate(in) + (R)-carnitine(out) = glutarate(out) + (R)-carnitine(in). It carries out the reaction prostaglandin E2(out) + 2-oxoglutarate(in) = prostaglandin E2(in) + 2-oxoglutarate(out). The catalysed reaction is prostaglandin E2(out) + glutarate(in) = prostaglandin E2(in) + glutarate(out). It catalyses the reaction urate(in) + glutarate(out) = urate(out) + glutarate(in). The enzyme catalyses taurocholate(out) + 2-oxoglutarate(in) = taurocholate(in) + 2-oxoglutarate(out). It carries out the reaction dehydroepiandrosterone 3-sulfate(out) + 2-oxoglutarate(in) = dehydroepiandrosterone 3-sulfate(in) + 2-oxoglutarate(out). The catalysed reaction is kynurenate(out) + a dicarboxylate(in) = kynurenate(in) + a dicarboxylate(out). It catalyses the reaction (indol-3-yl)acetate(out) + a dicarboxylate(in) = (indol-3-yl)acetate(in) + a dicarboxylate(out). The enzyme catalyses indoxyl sulfate(out) + a dicarboxylate(in) = indoxyl sulfate(in) + a dicarboxylate(out). It carries out the reaction N-benzoylglycine(out) + a dicarboxylate(in) = N-benzoylglycine(in) + a dicarboxylate(out). The catalysed reaction is 3-carboxy-4-methyl-5-propyl-2-furanpropanoate(out) + a dicarboxylate(in) = 3-carboxy-4-methyl-5-propyl-2-furanpropanoate(in) + a dicarboxylate(out). It catalyses the reaction (6R)-L-erythro-5,6,7,8-tetrahydrobiopterin(out) + a dicarboxylate(in) = (6R)-L-erythro-5,6,7,8-tetrahydrobiopterin(in) + a dicarboxylate(out). The enzyme catalyses L-erythro-7,8-dihydrobiopterin(out) + a dicarboxylate(in) = L-erythro-7,8-dihydrobiopterin(in) + a dicarboxylate(out). It carries out the reaction L-sepiapterin(out) + a dicarboxylate(in) = L-sepiapterin(in) + a dicarboxylate(out). Functions as an organic anion/dicarboxylate exchanger that couples organic anion uptake indirectly to the sodium gradient. Transports organic anions such as estrone 3-sulfate (E1S) and urate in exchange for dicarboxylates such as glutarate or ketoglutarate (2-oxoglutarate). Plays an important role in the excretion of endogenous and exogenous organic anions, especially from the kidney and the brain. E1S transport is pH- and chloride-dependent and may also involve E1S/cGMP exchange. Responsible for the transport of prostaglandin E2 (PGE2) and prostaglandin F2(alpha) (PGF2(alpha)) in the basolateral side of the renal tubule. Involved in the transport of neuroactive tryptophan metabolites kynurenate and xanthurenate. Functions as a biopterin transporters involved in the uptake and the secretion of coenzymes tetrahydrobiopterin (BH4), dihydrobiopterin (BH2) and sepiapterin to urine, thereby determining baseline levels of blood biopterins. May be involved in the basolateral transport of steviol, a metabolite of the popular sugar substitute stevioside. May participate in the detoxification/ renal excretion of drugs and xenobiotics, such as the histamine H(2)-receptor antagonists fexofenadine and cimetidine, the antibiotic benzylpenicillin (PCG), the anionic herbicide 2,4-dichloro-phenoxyacetate (2,4-D), the diagnostic agent p-aminohippurate (PAH), the antiviral acyclovir (ACV), and the mycotoxin ochratoxin (OTA), by transporting these exogenous organic anions across the cell membrane in exchange for dicarboxylates such as 2-oxoglutarate. Contributes to the renal uptake of potent uremic toxins (indoxyl sulfate (IS), indole acetate (IA), hippurate/N-benzoylglycine (HA) and 3-carboxy-4-methyl-5-propyl-2-furanpropionate (CMPF)), pravastatin, PCG, E1S and dehydroepiandrosterone sulfate (DHEAS), and is partly involved in the renal uptake of temocaprilat (an angiotensin-converting enzyme (ACE) inhibitor). May contribute to the release of cortisol in the adrenals. Involved in one of the detoxification systems on the choroid plexus (CP), removes substrates such as E1S or taurocholate (TC), PCG, 2,4-D and PAH, from the cerebrospinal fluid (CSF) to the blood for eventual excretion in urine and bile. Also contributes to the uptake of several other organic compounds such as the prostanoids prostaglandin E(2) and prostaglandin F(2-alpha), L-carnitine, and the therapeutic drugs allopurinol, 6-mercaptopurine (6-MP) and 5-fluorouracil (5-FU). Mediates the transport of PAH, PCG, and the statins pravastatin and pitavastatin, from the cerebrum into the blood circulation across the blood-brain barrier (BBB). In summary, plays a role in the efflux of drugs and xenobiotics, helping reduce their undesired toxicological effects on the body. This Pongo abelii (Sumatran orangutan) protein is Organic anion transporter 3 (SLC22A8).